A 177-amino-acid chain; its full sequence is Peptide methionine sulfoxide reductase MsrA 2 (177 aa).

Residue Cys-12 is part of the active site.

This sequence belongs to the MsrA Met sulfoxide reductase family.

It carries out the reaction L-methionyl-[protein] + [thioredoxin]-disulfide + H2O = L-methionyl-(S)-S-oxide-[protein] + [thioredoxin]-dithiol. It catalyses the reaction [thioredoxin]-disulfide + L-methionine + H2O = L-methionine (S)-S-oxide + [thioredoxin]-dithiol. Its function is as follows. Has an important function as a repair enzyme for proteins that have been inactivated by oxidation. Catalyzes the reversible oxidation-reduction of methionine sulfoxide in proteins to methionine. In Staphylococcus aureus (strain MRSA252), this protein is Peptide methionine sulfoxide reductase MsrA 2.